Reading from the N-terminus, the 248-residue chain is Transmembrane protein 223 (248 aa).

Transmembrane regions (helical) follow at residues 46–68 (IFRP…AAVA), 84–104 (LLAI…HFAF), and 140–160 (YGFT…ALLF).

The protein belongs to the TMEM223 family.

It localises to the mitochondrion inner membrane. Mitochondrial ribosome-associated protein involved in the first steps of cytochrome c oxidase complex (complex IV) biogenesis. Stimulates the translation of MT-CO1 mRNA and is a constituent of early MT-CO1 assembly intermediates. In Danio rerio (Zebrafish), this protein is Transmembrane protein 223.